The primary structure comprises 154 residues: Ribosomal RNA large subunit methyltransferase H (154 aa).

S-adenosyl-L-methionine-binding positions include Leu-70, Gly-102, and 121–126; that span reads LSRMTL.

It belongs to the RNA methyltransferase RlmH family. Homodimer.

It localises to the cytoplasm. The catalysed reaction is pseudouridine(1915) in 23S rRNA + S-adenosyl-L-methionine = N(3)-methylpseudouridine(1915) in 23S rRNA + S-adenosyl-L-homocysteine + H(+). Specifically methylates the pseudouridine at position 1915 (m3Psi1915) in 23S rRNA. The chain is Ribosomal RNA large subunit methyltransferase H from Geobacter sp. (strain M21).